Consider the following 508-residue polypeptide: Pentatricopeptide repeat-containing protein At5g48730, chloroplastic (508 aa).

Over residues 1–10 (MVSLSTSTSH) the composition is skewed to polar residues. The disordered stretch occupies residues 1-22 (MVSLSTSTSHAPPLPTNRRTAE). The transit peptide at 1 to 28 (MVSLSTSTSHAPPLPTNRRTAERTFTVR) directs the protein to the chloroplast. PPR repeat units follow at residues 149-183 (NVGIYVKLIVMLGKCKQPEKAHELFQEMINEGCVV), 184-214 (NHEVYTALVSAYSRSGRFDAAFTLLERMKSS), 220-254 (DVHTYSILIKSFLQVFAFDKVQDLLSDMRRQGIRP), 255-290 (NTITYNTLIDAYGKAKMFVEMESTLIQMLGEDDCKP), 291-325 (DSWTMNSTLRAFGGNGQIEMMENCYEKFQSSGIEP), 326-360 (NIRTFNILLDSYGKSGNYKKMSAVMEYMQKYHYSW), 361-395 (TIVTYNVVIDAFGRAGDLKQMEYLFRLMQSERIFP), 396-430 (SCVTLCSLVRAYGRASKADKIGGVLRFIENSDIRL), 431-465 (DLVFFNCLVDAYGRMEKFAEMKGVLELMEKKGFKP), and 466-500 (DKITYRTMVKAYRISGMTTHVKELHGVVESVGEAQ).

Belongs to the PPR family. P subfamily.

The protein resides in the plastid. The protein localises to the chloroplast. The protein is Pentatricopeptide repeat-containing protein At5g48730, chloroplastic of Arabidopsis thaliana (Mouse-ear cress).